The sequence spans 379 residues: Sperm microtubule associated protein 2 (379 aa).

Positions 1–82 are disordered; it reads MGDSRRRSLG…EFPETLDPKE (82 aa). 2 stretches are compositionally biased toward basic and acidic residues: residues 19–29 and 38–50; these read GRSEREQDGDP and ESRR…RQDL. A compositionally biased stretch (acidic residues) spans 56-76; that stretch reads GPEDPEEELPPEEVAGEEFPE. 6 THEG repeats span residues 118–137, 184–203, 222–241, 258–277, 290–309, and 326–345; these read KARK…PKIN, TITV…PKRF, SSLE…PKIR, AAQM…PKAP, PKPH…PKAQ, and VTKK…PKVR. Residue serine 295 is modified to Phosphoserine. Residues 344–379 form a disordered region; the sequence is VRKGLNEGYDRRPLASMSLPPPKASPEKCDQPRPGL. Composition is skewed to basic and acidic residues over residues 347-356 and 368-379; these read GLNEGYDRRP and SPEKCDQPRPGL.

Interacts with CCT5. As to expression, testis specific.

The protein localises to the nucleus. Functionally, may be involved (but not essential) in spermatogenesis. This is Sperm microtubule associated protein 2 from Homo sapiens (Human).